The primary structure comprises 655 residues: Large subunit GTPase 1 homolog (655 aa).

Residues 1–31 (MGRRRAPGGGSLGRVLIRHQTQRSRSHRHTD) are disordered. Positions 16-28 (LIRHQTQRSRSHR) are enriched in basic residues. Residues serine 93 and serine 97 each carry the phosphoserine modification. Positions 164-441 (WRQLWRVIER…LCDCPGLVMP (278 aa)) constitute a CP-type G domain. 212-215 (NKAD) is a GTP binding site. Position 252 is a phosphoserine (serine 252). The interval 253–359 (KDEVNSVAGE…ENSQMSNKSH (107 aa)) is disordered. Residues 288–327 (EESESDDDDSEYEDCQEDEEEDWQTCSEEDSNPEEGQEEG) show a composition bias toward acidic residues. Residues 328–339 (GCDRDQKEHGPE) show a composition bias toward basic and acidic residues. A compositionally biased stretch (polar residues) spans 344-359 (QSRASPENSQMSNKSH). Residues 390 to 397 (GYPNVGKS) and 434 to 437 (DCPG) contribute to the GTP site. Residues 625 to 655 (SAENVPGKPWKKHGNRNKKEKSRRLYRHLDV) are disordered. A compositionally biased stretch (basic residues) spans 633 to 655 (PWKKHGNRNKKEKSRRLYRHLDV).

This sequence belongs to the TRAFAC class YlqF/YawG GTPase family. LSG1 subfamily.

It is found in the cytoplasm. The protein resides in the endoplasmic reticulum. The protein localises to the nucleus. It localises to the cajal body. It carries out the reaction GTP + H2O = GDP + phosphate + H(+). Functionally, functions as a GTPase. May act by mediating the release of NMD3 from the 60S ribosomal subunit after export into the cytoplasm during the 60S ribosomal subunit maturation. This chain is Large subunit GTPase 1 homolog, found in Rattus norvegicus (Rat).